A 223-amino-acid chain; its full sequence is NAD(P)H-hydrate epimerase (223 aa).

The YjeF N-terminal domain maps to 9–211; the sequence is AIKLDEELMG…ELKDKLHLIL (203 aa). 60–64 contacts (6S)-NADPHX; the sequence is NNGGD. K(+)-binding residues include Asn-61 and Asp-120. (6S)-NADPHX-binding positions include 124–130 and Asp-153; that span reads GFSFKGP. Position 156 (Ser-156) interacts with K(+).

This sequence belongs to the NnrE/AIBP family. It depends on K(+) as a cofactor.

It carries out the reaction (6R)-NADHX = (6S)-NADHX. It catalyses the reaction (6R)-NADPHX = (6S)-NADPHX. Catalyzes the epimerization of the S- and R-forms of NAD(P)HX, a damaged form of NAD(P)H that is a result of enzymatic or heat-dependent hydration. This is a prerequisite for the S-specific NAD(P)H-hydrate dehydratase to allow the repair of both epimers of NAD(P)HX. The protein is NAD(P)H-hydrate epimerase of Entamoeba histolytica (strain ATCC 30459 / HM-1:IMSS / ABRM).